The sequence spans 118 residues: Small ribosomal subunit protein uS13 (118 aa).

Positions 94–118 (SLPLRGQRTKTNARTRKGPRKPIKK) are disordered.

This sequence belongs to the universal ribosomal protein uS13 family. Part of the 30S ribosomal subunit. Forms a loose heterodimer with protein S19. Forms two bridges to the 50S subunit in the 70S ribosome.

Located at the top of the head of the 30S subunit, it contacts several helices of the 16S rRNA. In the 70S ribosome it contacts the 23S rRNA (bridge B1a) and protein L5 of the 50S subunit (bridge B1b), connecting the 2 subunits; these bridges are implicated in subunit movement. Contacts the tRNAs in the A and P-sites. This chain is Small ribosomal subunit protein uS13, found in Colwellia psychrerythraea (strain 34H / ATCC BAA-681) (Vibrio psychroerythus).